Consider the following 483-residue polypeptide: Glutamyl-tRNA(Gln) amidotransferase subunit A (483 aa).

Catalysis depends on charge relay system residues Lys-77 and Ser-152. The Acyl-ester intermediate role is filled by Ser-176.

It belongs to the amidase family. GatA subfamily. As to quaternary structure, heterotrimer of A, B and C subunits.

It catalyses the reaction L-glutamyl-tRNA(Gln) + L-glutamine + ATP + H2O = L-glutaminyl-tRNA(Gln) + L-glutamate + ADP + phosphate + H(+). Allows the formation of correctly charged Gln-tRNA(Gln) through the transamidation of misacylated Glu-tRNA(Gln) in organisms which lack glutaminyl-tRNA synthetase. The reaction takes place in the presence of glutamine and ATP through an activated gamma-phospho-Glu-tRNA(Gln). The chain is Glutamyl-tRNA(Gln) amidotransferase subunit A from Listeria monocytogenes serotype 4a (strain HCC23).